We begin with the raw amino-acid sequence, 359 residues long: sn-1 linoleoyl-lipid 6-desaturase (359 aa).

The next 2 helical transmembrane spans lie at 45 to 65 and 69 to 89; these read LIIVLWLFSAWAFVLFAPVIF and LLGCMVLAIALAAFSFNVGHD. Residues 88–92 carry the Histidine box-1 motif; it reads HDANH. Positions 123–128 match the Histidine box-2 motif; sequence HNYLHH. Helical transmembrane passes span 165–185, 206–226, and 231–251; these read IWGLYLFIPFYWFLYDVYLVL, LLGIKLLWLGYVFGLPLALGF, and VLIGASVTYMTYGIVVCTIFM. The short motif at 306 to 310 is the Histidine box-3 element; sequence HHLFP.

It belongs to the fatty acid desaturase type 2 family. Fe(2+) serves as cofactor.

It localises to the membrane. The enzyme catalyses a 1-[(9Z,12Z)-octadecdienoyl]-2-acyl-glycerolipid + 2 reduced [2Fe-2S]-[ferredoxin] + O2 + 2 H(+) = a 1-[(6Z,9Z,12Z)-octadectrienoyl]-2-acyl-glycerolipid + 2 oxidized [2Fe-2S]-[ferredoxin] + 2 H2O. It participates in lipid metabolism; polyunsaturated fatty acid biosynthesis. In terms of biological role, desaturase involved in fatty acid biosynthesis. Introduces a double bond at carbon 6 of linoleoyl group (18:2) attached to the sn-1 position of the glycerol moiety of membrane glycerolipids, leading to the formation of gamma-linolenic acid (GLA). This Synechocystis sp. (strain ATCC 27184 / PCC 6803 / Kazusa) protein is sn-1 linoleoyl-lipid 6-desaturase.